The following is a 547-amino-acid chain: Apolipoprotein N-acyltransferase (547 aa).

A run of 6 helical transmembrane segments spans residues 31–51 (PLPA…AAHA), 65–85 (GWLF…VSMH), 89–109 (GLAA…LALF), 144–164 (AACW…FPWL), 181–201 (LLGV…LAGL), and 215–235 (LAAG…QFSW). One can recognise a CN hydrolase domain in the interval 248–511 (VQGNVEQSQK…AGVLPVAVQG (264 aa)). Glutamate 292 acts as the Proton acceptor in catalysis. The active site involves lysine 366. The active-site Nucleophile is the cysteine 416.

It belongs to the CN hydrolase family. Apolipoprotein N-acyltransferase subfamily.

The protein resides in the cell inner membrane. It carries out the reaction N-terminal S-1,2-diacyl-sn-glyceryl-L-cysteinyl-[lipoprotein] + a glycerophospholipid = N-acyl-S-1,2-diacyl-sn-glyceryl-L-cysteinyl-[lipoprotein] + a 2-acyl-sn-glycero-3-phospholipid + H(+). It functions in the pathway protein modification; lipoprotein biosynthesis (N-acyl transfer). In terms of biological role, catalyzes the phospholipid dependent N-acylation of the N-terminal cysteine of apolipoprotein, the last step in lipoprotein maturation. The chain is Apolipoprotein N-acyltransferase from Bordetella bronchiseptica (strain ATCC BAA-588 / NCTC 13252 / RB50) (Alcaligenes bronchisepticus).